Here is a 550-residue protein sequence, read N- to C-terminus: Dihydroxy-acid dehydratase (550 aa).

Aspartate 78 is a Mg(2+) binding site. Cysteine 119 is a [2Fe-2S] cluster binding site. 2 residues coordinate Mg(2+): aspartate 120 and lysine 121. Residue lysine 121 is modified to N6-carboxylysine. Cysteine 191 contributes to the [2Fe-2S] cluster binding site. Glutamate 440 is a Mg(2+) binding site. Catalysis depends on serine 466, which acts as the Proton acceptor.

It belongs to the IlvD/Edd family. Homodimer. [2Fe-2S] cluster serves as cofactor. It depends on Mg(2+) as a cofactor.

The catalysed reaction is (2R)-2,3-dihydroxy-3-methylbutanoate = 3-methyl-2-oxobutanoate + H2O. It catalyses the reaction (2R,3R)-2,3-dihydroxy-3-methylpentanoate = (S)-3-methyl-2-oxopentanoate + H2O. The protein operates within amino-acid biosynthesis; L-isoleucine biosynthesis; L-isoleucine from 2-oxobutanoate: step 3/4. It functions in the pathway amino-acid biosynthesis; L-valine biosynthesis; L-valine from pyruvate: step 3/4. In terms of biological role, functions in the biosynthesis of branched-chain amino acids. Catalyzes the dehydration of (2R,3R)-2,3-dihydroxy-3-methylpentanoate (2,3-dihydroxy-3-methylvalerate) into 2-oxo-3-methylpentanoate (2-oxo-3-methylvalerate) and of (2R)-2,3-dihydroxy-3-methylbutanoate (2,3-dihydroxyisovalerate) into 2-oxo-3-methylbutanoate (2-oxoisovalerate), the penultimate precursor to L-isoleucine and L-valine, respectively. The polypeptide is Dihydroxy-acid dehydratase (Methanococcus maripaludis (strain DSM 14266 / JCM 13030 / NBRC 101832 / S2 / LL)).